The chain runs to 89 residues: Small ribosomal subunit protein uS15 (89 aa).

It belongs to the universal ribosomal protein uS15 family. In terms of assembly, part of the 30S ribosomal subunit. Forms a bridge to the 50S subunit in the 70S ribosome, contacting the 23S rRNA.

Its function is as follows. One of the primary rRNA binding proteins, it binds directly to 16S rRNA where it helps nucleate assembly of the platform of the 30S subunit by binding and bridging several RNA helices of the 16S rRNA. Functionally, forms an intersubunit bridge (bridge B4) with the 23S rRNA of the 50S subunit in the ribosome. The protein is Small ribosomal subunit protein uS15 of Psychromonas ingrahamii (strain DSM 17664 / CCUG 51855 / 37).